A 325-amino-acid chain; its full sequence is NADH-quinone oxidoreductase subunit H (325 aa).

8 helical membrane passes run 11–31 (ILLS…CGAF), 81–101 (VIFT…FAIV), 114–134 (IGIL…LFAG), 154–174 (LSYE…AGSF), 186–206 (IWNV…GVAV), 237–257 (FFVG…TLFF), 265–285 (LPPF…FILI), and 304–324 (VCLP…LWQA).

The protein belongs to the complex I subunit 1 family. In terms of assembly, NDH-1 is composed of 13 different subunits. Subunits NuoA, H, J, K, L, M, N constitute the membrane sector of the complex.

It is found in the cell inner membrane. The catalysed reaction is a quinone + NADH + 5 H(+)(in) = a quinol + NAD(+) + 4 H(+)(out). Its function is as follows. NDH-1 shuttles electrons from NADH, via FMN and iron-sulfur (Fe-S) centers, to quinones in the respiratory chain. The immediate electron acceptor for the enzyme in this species is believed to be ubiquinone. Couples the redox reaction to proton translocation (for every two electrons transferred, four hydrogen ions are translocated across the cytoplasmic membrane), and thus conserves the redox energy in a proton gradient. This subunit may bind ubiquinone. This chain is NADH-quinone oxidoreductase subunit H, found in Enterobacter sp. (strain 638).